The primary structure comprises 273 residues: MATYLVGDLQGCYDELQLLLETVQFNPVQDKLYLVGDLVARGDKSLECLRFVKSLGAAAQMVLGNHDLHLISTALGIKKVSLQDHVEAIFTAPDFVELIDWLRHQPLLVHDEKCDFVMSHAGISPDWDLDTAKSCAREVENELQHGDYHYLISNMYDNQPDRWSADLQGLQRLRYSINVFTRMRFCYRDHRLDFACKASVEKASQELIPWFNLDNPLFKVQNLVFGHWASLVDTPTPANIYALDTGCVWGNRMTMLRWEDKQYFVQGALKDYF.

Belongs to the Ap4A hydrolase family.

It carries out the reaction P(1),P(4)-bis(5'-adenosyl) tetraphosphate + H2O = 2 ADP + 2 H(+). Functionally, hydrolyzes diadenosine 5',5'''-P1,P4-tetraphosphate to yield ADP. This is Bis(5'-nucleosyl)-tetraphosphatase, symmetrical from Histophilus somni (strain 129Pt) (Haemophilus somnus).